Consider the following 360-residue polypeptide: A-type ATP synthase subunit C (360 aa).

A disordered region spans residues 1–23 (MRLLERLWGKKPSRKSDKKKKGT). A compositionally biased stretch (basic residues) spans 9-22 (GKKPSRKSDKKKKG).

Belongs to the V-ATPase V0D/AC39 subunit family. Has multiple subunits with at least A(3), B(3), C, D, E, F, H, I and proteolipid K(x).

It localises to the cell membrane. Its function is as follows. Component of the A-type ATP synthase that produces ATP from ADP in the presence of a proton gradient across the membrane. In Methanosarcina acetivorans (strain ATCC 35395 / DSM 2834 / JCM 12185 / C2A), this protein is A-type ATP synthase subunit C.